Consider the following 94-residue polypeptide: Neutrophil antibiotic peptide NP-1 (94 aa).

The first 19 residues, 1-19, serve as a signal peptide directing secretion; it reads MRTLTLLTALLLLALHTQA. Positions 20–62 are excised as a propeptide; it reads KSPQGTAEEAPDQEQLVMEDQDISISFGGDKGTALQDADVKAG. Intrachain disulfides connect cysteine 65-cysteine 93, cysteine 67-cysteine 82, and cysteine 72-cysteine 92. At tyrosine 84 the chain carries Phosphotyrosine.

This sequence belongs to the alpha-defensin family. Highest expression in bone marrow and to a much lesser extent in small intestine.

It is found in the secreted. Active in vitro against S.aureus, fungi, Gram-positive and Gram-negative bacteria and to a lesser extent against an enveloped virus. In Rattus norvegicus (Rat), this protein is Neutrophil antibiotic peptide NP-1.